Reading from the N-terminus, the 511-residue chain is Light-independent protochlorophyllide reductase subunit B (511 aa).

Asp36 contributes to the [4Fe-4S] cluster binding site. Residue Asp299 is the Proton donor of the active site. 434 to 435 (GM) is a binding site for substrate.

Belongs to the ChlB/BchB/BchZ family. In terms of assembly, protochlorophyllide reductase is composed of three subunits; ChlL, ChlN and ChlB. Forms a heterotetramer of two ChlB and two ChlN subunits. Requires [4Fe-4S] cluster as cofactor.

The protein resides in the plastid. Its subcellular location is the chloroplast. The enzyme catalyses chlorophyllide a + oxidized 2[4Fe-4S]-[ferredoxin] + 2 ADP + 2 phosphate = protochlorophyllide a + reduced 2[4Fe-4S]-[ferredoxin] + 2 ATP + 2 H2O. It functions in the pathway porphyrin-containing compound metabolism; chlorophyll biosynthesis (light-independent). Component of the dark-operative protochlorophyllide reductase (DPOR) that uses Mg-ATP and reduced ferredoxin to reduce ring D of protochlorophyllide (Pchlide) to form chlorophyllide a (Chlide). This reaction is light-independent. The NB-protein (ChlN-ChlB) is the catalytic component of the complex. The polypeptide is Light-independent protochlorophyllide reductase subunit B (Huperzia lucidula (Shining clubmoss)).